A 308-amino-acid chain; its full sequence is Probable GTP 3',8-cyclase (308 aa).

Residues 4–224 (RFGRPLEDLR…QIRKKHFRPR (221 aa)) enclose the Radical SAM core domain. Arg13 is a binding site for GTP. The [4Fe-4S] cluster site is built by Cys20, Cys24, and Cys27. Lys60 provides a ligand contact to GTP. Position 64 (Gly64) interacts with S-adenosyl-L-methionine. Residue Thr90 participates in GTP binding. S-adenosyl-L-methionine is bound at residue Ser114. Lys151 is a GTP binding site. The [4Fe-4S] cluster site is built by Cys245 and Cys248. 250-252 (RIR) lines the GTP pocket. Cys262 serves as a coordination point for [4Fe-4S] cluster.

It belongs to the radical SAM superfamily. MoaA family. It depends on [4Fe-4S] cluster as a cofactor.

The catalysed reaction is GTP + AH2 + S-adenosyl-L-methionine = (8S)-3',8-cyclo-7,8-dihydroguanosine 5'-triphosphate + 5'-deoxyadenosine + L-methionine + A + H(+). It functions in the pathway cofactor biosynthesis; molybdopterin biosynthesis. Catalyzes the cyclization of GTP to (8S)-3',8-cyclo-7,8-dihydroguanosine 5'-triphosphate. This is Probable GTP 3',8-cyclase from Saccharolobus islandicus (strain L.S.2.15 / Lassen #1) (Sulfolobus islandicus).